The sequence spans 396 residues: L-lactate dehydrogenase (396 aa).

The 380-residue stretch at 1–380 (MIISAASDYR…TQDSLVQGLG (380 aa)) folds into the FMN hydroxy acid dehydrogenase domain. Substrate is bound at residue tyrosine 24. 2 residues coordinate FMN: serine 106 and glutamine 127. Tyrosine 129 is a binding site for substrate. FMN is bound at residue threonine 155. Arginine 164 is a substrate binding site. FMN is bound at residue lysine 251. Histidine 275 acts as the Proton acceptor in catalysis. Residue arginine 278 coordinates substrate. 306–330 (DSGIRNGLDVVRMIALGADTILLGR) is a binding site for FMN.

Belongs to the FMN-dependent alpha-hydroxy acid dehydrogenase family. The cofactor is FMN.

The protein localises to the cell inner membrane. It carries out the reaction (S)-lactate + A = pyruvate + AH2. In terms of biological role, catalyzes the conversion of L-lactate to pyruvate. Is coupled to the respiratory chain. This Escherichia coli O81 (strain ED1a) protein is L-lactate dehydrogenase.